The sequence spans 381 residues: 3-isopropylmalate dehydrogenase (381 aa).

Arg-104, Arg-114, Arg-142, and Asp-232 together coordinate substrate. Asp-232, Asp-256, and Asp-260 together coordinate Mg(2+). 290–302 (GSAPDIAGQDKAN) provides a ligand contact to NAD(+).

It belongs to the isocitrate and isopropylmalate dehydrogenases family. LeuB type 1 subfamily. In terms of assembly, homodimer. It depends on Mg(2+) as a cofactor. Mn(2+) is required as a cofactor.

Its subcellular location is the cytoplasm. It carries out the reaction (2R,3S)-3-isopropylmalate + NAD(+) = 4-methyl-2-oxopentanoate + CO2 + NADH. The protein operates within amino-acid biosynthesis; L-leucine biosynthesis; L-leucine from 3-methyl-2-oxobutanoate: step 3/4. In terms of biological role, catalyzes the oxidation of 3-carboxy-2-hydroxy-4-methylpentanoate (3-isopropylmalate) to 3-carboxy-4-methyl-2-oxopentanoate. The product decarboxylates to 4-methyl-2 oxopentanoate. The polypeptide is 3-isopropylmalate dehydrogenase (Synechococcus sp. (strain JA-3-3Ab) (Cyanobacteria bacterium Yellowstone A-Prime)).